The sequence spans 723 residues: Probable inactive serine/threonine-protein kinase fnkD (723 aa).

The 244-residue stretch at 33–276 folds into the Protein kinase domain; that stretch reads WEIITQLESN…TTSLPKYSTL (244 aa). 6 FNIP repeats span residues 301-342, 343-384, 385-426, 524-565, 566-606, and 647-690; these read FNQP…ELAS, FNQT…LLSS, FNQP…SLAS, FNQS…ILPS, FNHP…LGDE, and FNIE…FGIT.

Belongs to the protein kinase superfamily. STE Ser/Thr protein kinase family.

In Dictyostelium discoideum (Social amoeba), this protein is Probable inactive serine/threonine-protein kinase fnkD (fnkD-1).